A 437-amino-acid chain; its full sequence is Transcription factor AP-2-alpha (437 aa).

K10 participates in a covalent cross-link: Glycyl lysine isopeptide (Lys-Gly) (interchain with G-Cter in SUMO); alternate. K10 participates in a covalent cross-link: Glycyl lysine isopeptide (Lys-Gly) (interchain with G-Cter in SUMO2); alternate. The tract at residues 14-107 (CEDRHDGASN…GQRQSQESGL (94 aa)) is disordered. The PPxY motif motif lies at 57 to 62 (YFPPPY). 2 stretches are compositionally biased toward low complexity: residues 65 to 74 (IYPQSQDPYS) and 88 to 101 (QPQPQHPGWPGQRQ). Glycyl lysine isopeptide (Lys-Gly) (interchain with G-Cter in SUMO2) cross-links involve residues K177 and K184. S239 carries the post-translational modification Phosphoserine; by PKA. An H-S-H (helix-span-helix), dimerization region spans residues 280 to 410 (RRKAANVTLL…YLTEALKAMD (131 aa)). A compositionally biased stretch (polar residues) spans 414–427 (LSNNPNSHTDNNAK). Residues 414–437 (LSNNPNSHTDNNAKSSDKEEKHRK) are disordered. Positions 428–437 (SSDKEEKHRK) are enriched in basic and acidic residues.

The protein belongs to the AP-2 family. Binds DNA as a dimer. Can form homodimers or heterodimers with other AP-2 family members. Interacts with WWOX. Interacts with CITED4. Interacts with UBE2I. Interacts with RALBP1 in a complex also containing EPN1 and NUMB during interphase and mitosis. Interacts with KCTD1; this interaction represses transcription activation. Interacts (via C-terminus) with CITED2 (via C-terminus); the interaction stimulates TFAP2A-transcriptional activation. Interacts (via N-terminus) with EP300 (via N-terminus); the interaction requires CITED2. Interacts with KCTD15; this interaction inhibits TFAP2A transcriptional activation. Post-translationally, sumoylated on Lys-10; which inhibits transcriptional activity.

Its subcellular location is the nucleus. In terms of biological role, sequence-specific DNA-binding protein that interacts with inducible viral and cellular enhancer elements to regulate transcription of selected genes. AP-2 factors bind to the consensus sequence 5'-GCCNNNGGC-3' and activate genes involved in a large spectrum of important biological functions including proper eye, face, body wall, limb and neural tube development. They also suppress a number of genes including MCAM/MUC18, C/EBP alpha and MYC. AP-2-alpha is the only AP-2 protein required for early morphogenesis of the lens vesicle. Together with the CITED2 coactivator, stimulates the PITX2 P1 promoter transcription activation. Associates with chromatin to the PITX2 P1 promoter region. This chain is Transcription factor AP-2-alpha (TFAP2A), found in Bos taurus (Bovine).